A 405-amino-acid polypeptide reads, in one-letter code: Deoxyguanosinetriphosphate triphosphohydrolase-like protein (405 aa).

Positions 75 to 219 (RLTHTIEVAQ…AAIADDIAYN (145 aa)) constitute an HD domain.

Belongs to the dGTPase family. Type 2 subfamily.

The protein is Deoxyguanosinetriphosphate triphosphohydrolase-like protein of Rhizobium leguminosarum bv. trifolii (strain WSM2304).